A 599-amino-acid chain; its full sequence is Leishmanolysin (599 aa).

Positions 1–39 (MSVDSSSTHRHRSVAARLVRLAAAGAAVIAAVGTAAAWA) are cleaved as a signal peptide. A propeptide spans 40–97 (HAGAVQHRCIHDAMQARVRQSVARHHTAPGAVSAVGLPYVTLDTAAAADRRPGSAPTV) (activation peptide). Cystine bridges form between cysteine 122–cysteine 139 and cysteine 188–cysteine 227. Histidine 261 contributes to the Zn(2+) binding site. Glutamate 262 is an active-site residue. Zn(2+) is bound at residue histidine 265. Asparagine 297 is a glycosylation site (N-linked (GlcNAc...) asparagine). 7 cysteine pairs are disulfide-bonded: cysteine 311–cysteine 383, cysteine 390–cysteine 452, cysteine 403–cysteine 422, cysteine 412–cysteine 486, cysteine 463–cysteine 507, cysteine 512–cysteine 562, and cysteine 532–cysteine 555. Histidine 331 serves as a coordination point for Zn(2+). Asparagine 394 carries an N-linked (GlcNAc...) asparagine glycan. Asparagine 574 carries the GPI-anchor amidated asparagine lipid modification. A propeptide spans 575-599 (AAAGRRGPRAAATALLVAALLAVAL) (removed in mature form).

The protein belongs to the peptidase M8 family. Requires Zn(2+) as cofactor.

It localises to the cell membrane. The catalysed reaction is Preference for hydrophobic residues at P1 and P1' and basic residues at P2' and P3'. A model nonapeptide is cleaved at -Ala-Tyr-|-Leu-Lys-Lys-.. In terms of biological role, has an integral role during the infection of macrophages in the mammalian host. The chain is Leishmanolysin (gp63) from Leishmania chagasi.